We begin with the raw amino-acid sequence, 151 residues long: MGNGPPMERAVSSDDILTYYNTFIFFIYFNFTNENIYIIYTIYMKVQNTIVYIVLLLIVVVIIWNFTRKEGWSDYNAPNDFMKIYYSNIVEDKKLAEKYPFFGTGPFTGLRCRKPNNVGCNTTWVSGQLVELTPKLKEQIECKFGIQYVKT.

2 hydrophobic regions span residues 23–43 (FIFF…YTIY) and 46–66 (VQNT…IWNF). The cysteines at positions 112 and 120 are disulfide-linked.

As to quaternary structure, interacts with the major capsid protein.

Its subcellular location is the virion. One of the minor capsid proteins that constitute a network internal to the major capsid proteins and outside the lipid membrane. The minor capsid protein P12 does not serve a cross-linking function between neighboring capsomers, it may play a role in the viral capsid assembly. This Paramecium bursaria Chlorella virus 1 (PBCV-1) protein is Minor capsid protein P12.